The primary structure comprises 256 residues: Imidazole glycerol phosphate synthase subunit HisF (256 aa).

Active-site residues include aspartate 11 and aspartate 130.

Belongs to the HisA/HisF family. As to quaternary structure, heterodimer of HisH and HisF.

It is found in the cytoplasm. It catalyses the reaction 5-[(5-phospho-1-deoxy-D-ribulos-1-ylimino)methylamino]-1-(5-phospho-beta-D-ribosyl)imidazole-4-carboxamide + L-glutamine = D-erythro-1-(imidazol-4-yl)glycerol 3-phosphate + 5-amino-1-(5-phospho-beta-D-ribosyl)imidazole-4-carboxamide + L-glutamate + H(+). The protein operates within amino-acid biosynthesis; L-histidine biosynthesis; L-histidine from 5-phospho-alpha-D-ribose 1-diphosphate: step 5/9. IGPS catalyzes the conversion of PRFAR and glutamine to IGP, AICAR and glutamate. The HisF subunit catalyzes the cyclization activity that produces IGP and AICAR from PRFAR using the ammonia provided by the HisH subunit. This chain is Imidazole glycerol phosphate synthase subunit HisF, found in Prochlorococcus marinus (strain AS9601).